Reading from the N-terminus, the 1717-residue chain is PH domain leucine-rich repeat-containing protein phosphatase 1 (1717 aa).

At Met1 the chain carries N-acetylmethionine. Disordered stretches follow at residues 1 to 25 (MEPAAAATVQRLPELGREDRASAPA), 41 to 118 (LAAA…GANS), 136 to 156 (AASSSSSSSAAAASHSPGAAG), and 252 to 470 (PGAA…PPPT). The segment covering 98–110 (APQPIAGGAAPVP) has biased composition (low complexity). Positions 262–274 (EPPPEAGPRLAPP) are enriched in pro residues. Composition is skewed to low complexity over residues 313 to 325 (SRRASPAPSDSSP) and 333 to 345 (PVSSPRAPRPVVS). Phosphoserine is present on Ser317. Polar residues-rich tracts occupy residues 346–358 (DTESFSLSPSAES) and 408–417 (QTASSPQPQQ). A Phosphoserine modification is found at Ser412. The PH domain occupies 536–636 (RIQLSGMYNV…WLRQVSKVAS (101 aa)). LRR repeat units follow at residues 638-659 (RISSVDLSCCSLEHLPANLFYS), 661-682 (DLTHLNLKQNFLRQNPSLPAAR), 692-712 (KLKSLNLSNNHLGDFPLAVCS), 715-736 (TLAELNVSCNALRSVPAAVGVM), 738-760 (NLQTFLLDGNFLQSLPAELENMK), 761-783 (QLSYLGLSFNEFTDIPEVLEKLT), 784-804 (AVDKLCMSGNCVETLRLQALR), 808-831 (HIKHVDLRLNVIRKLIADEVDFLQ), 832-853 (HVTQLDLRDNKLGDLDAMIFNN), 873-894 (FLKALYASSNELVQLDVYPVPN), 895-916 (YLSYMDVSRNRLENVPEWVCES), 918-939 (KLEVLDIGHNQICELPARLFCN), 941-962 (SLRKLLAGHNQLARLPERLERT), 963-984 (SVEVLDVQHNQLLELPPNLLMK), 987-1008 (SLRFLNASANKLESLPPATLSE), 1013-1033 (ILQELYLTNNSLTDKCVPLLT), 1037-1058 (HLKILHMAYNRLQSFPASKMAK), 1061-1082 (ELEEIDLSGNKLKAIPTTIMNC), 1084-1105 (RMHTVIAHSNCIEVFPEVMQLP), 1106-1127 (EIKCVDLSCNELSEVTLPENLP), and 1129-1150 (KLQELDLTGNPRLVLDHKTLEL). The tract at residues 1076–1205 (PTTIMNCRRM…NNFCDNREAL (130 aa)) is interaction with NHERF1. The region spanning 1175–1422 (SHGYTEASGV…DSISAVVVQL (248 aa)) is the PPM-type phosphatase domain. Mn(2+) is bound by residues Asp1210, Gly1211, Lys1374, and Asp1413. Disordered regions lie at residues 1458–1510 (DRPS…SPAY) and 1673–1717 (EVKE…DTPL). The segment covering 1468 to 1489 (SSSSGMASEISSELSTSEMSSE) has biased composition (low complexity). Positions 1715–1717 (TPL) match the PDZ-binding; required for interaction with NHERF1 motif.

As to quaternary structure, interacts with the nucleotide free form of K-Ras (KRAS) via its LRR repeats. Interacts with AKT2, AKT3, PRKCB isoform beta-II, STK4, RPS6KB1, RAF1. Isoform 1 (predominantly) and isoform 2 interact with BRAP. Interacts with FKBP5; FKBP5 acts as a scaffold for PHLPP1 and Akt. Interacts with SCRIB; SCRIB acts as a scaffold for PHLPP1 and Akt. Interacts with NHERF1; NHERF1 scaffolds a heterotrimeric complex with PTEN at the plasma membrane. Interacts with WDR48 and USP12. Mn(2+) serves as cofactor. In terms of tissue distribution, in colorectal cancer tissue, expression is highest in the surface epithelium of normal colonic mucosa adjacent to the cancer tissue but is largely excluded from the crypt bases. Expression is lost or significantly decreased in 78% of tested tumors (at protein level). Ubiquitously expressed in non-cancerous tissues.

Its subcellular location is the cytoplasm. The protein localises to the membrane. It is found in the nucleus. It localises to the cell membrane. The enzyme catalyses O-phospho-L-seryl-[protein] + H2O = L-seryl-[protein] + phosphate. The catalysed reaction is O-phospho-L-threonyl-[protein] + H2O = L-threonyl-[protein] + phosphate. Insensitive to okadaic acid. Deubiquitination by WDR48-USP12 complex positively regulates PHLPP1 stability. Functionally, protein phosphatase involved in regulation of Akt and PKC signaling. Mediates dephosphorylation in the C-terminal domain hydrophobic motif of members of the AGC Ser/Thr protein kinase family; specifically acts on 'Ser-473' of AKT2 and AKT3, 'Ser-660' of PRKCB and 'Ser-657' of PRKCA. Isoform 2 seems to have a major role in regulating Akt signaling in hippocampal neurons. Akt regulates the balance between cell survival and apoptosis through a cascade that primarily alters the function of transcription factors that regulate pro- and antiapoptotic genes. Dephosphorylation of 'Ser-473' of Akt triggers apoptosis and suppression of tumor growth. Dephosphorylation of PRKCA and PRKCB leads to their destabilization and degradation. Dephosphorylates STK4 on 'Thr-387' leading to STK4 activation and apoptosis. Dephosphorylates RPS6KB1 and is involved in regulation of cap-dependent translation. Inhibits cancer cell proliferation and may act as a tumor suppressor. Dephosphorylates RAF1 inhibiting its kinase activity. May act as a negative regulator of K-Ras signaling in membrane rafts. Involved in the hippocampus-dependent long-term memory formation. Involved in circadian control by regulating the consolidation of circadian periodicity after resetting. Involved in development and function of regulatory T-cells. The sequence is that of PH domain leucine-rich repeat-containing protein phosphatase 1 (PHLPP1) from Homo sapiens (Human).